Reading from the N-terminus, the 1218-residue chain is NACHT, LRR and PYD domains-containing protein 1a allele 3 (1218 aa).

Residues methionine 1–threonine 29 show a composition bias toward polar residues. Disordered regions lie at residues methionine 1–glutamine 44 and glutamate 71–glutamate 91. The span at arginine 77–leucine 87 shows a compositional bias: basic residues. The region spanning glutamine 175–leucine 484 is the NACHT domain. Glycine 181 to serine 188 lines the ATP pocket. LRR repeat units follow at residues lysine 343 to cysteine 364, asparagine 673 to cysteine 693, and arginine 730 to cysteine 750. A compositionally biased stretch (polar residues) spans threonine 799–lysine 815. The segment at threonine 799–valine 842 is disordered. Residues phenylalanine 835 to phenylalanine 968 are ZU5. In terms of domain architecture, FIIND spans phenylalanine 835–serine 1118. The UPA stretch occupies residues serine 969–serine 1118. Residues aspartate 1122–serine 1211 enclose the CARD domain.

Belongs to the NLRP family. Interacts (via LRR repeats) with BCL2 and BCL2L1 (via the loop between motifs BH4 and BH3). Interacts with NOD2; this interaction is enhanced in the presence of muramyl dipeptide (MDP) and increases IL1B release. Interacts with EIF2AK2/PKR; this interaction requires EIF2AK2 activity, is accompanied by EIF2AK2 autophosphorylation and promotes inflammasome assembly in response to danger-associated signals. Interacts with MEFV; this interaction targets Nlrp1a to degradation by autophagy, hence preventing excessive IL1B- and IL18-mediated inflammation. Interacts with DPP9; leading to inhibit activation of the inflammasome. DPP9 acts via formation of a ternary complex, composed of a DPP9 homodimer, one full-length NLRP1 protein, and one cleaved C-terminus of Nlrp1a (NACHT, LRR and PYD domains-containing protein 1a, C-terminus). Interacts with DPP8; leading to inhibit activation of the inflammasome, probably via formation of a ternary complex with DPP8. In terms of assembly, interacts with the C-terminal part of Nlrp1a (NACHT, LRR and PYD domains-containing protein 1a, C-terminus) in absence of pathogens and other damage-associated signals. As to quaternary structure, interacts with the N-terminal part of Nlrp1a (NACHT, LRR and PYD domains-containing protein 1a, N-terminus) in absence of pathogens and other damage-associated signals. Homomultimer; forms the Nlrp1a inflammasome polymeric complex, a filament composed of homopolymers of this form in response to pathogens and other damage-associated signals. The Nlrp1a inflammasome polymeric complex directly recruits pro-caspase-1 (proCASP1) independently of PYCARD/ASC. Interacts (via CARD domain) with CASP1 (via CARD domain); leading to CASP1 activation. In terms of processing, autocatalytically cleaved. Autocatalytic cleavage in FIIND region occurs constitutively, prior to activation signals, and is required for inflammasome activity (IL1B release), possibly by facilitating CASP1 binding. Both N- and C-terminal parts remain associated non-covalently. Ubiquitinated in response to pathogen-associated signals, leading to its degradation by the proteasome and subsequent release of the cleaved C-terminal part of the protein (NACHT, LRR and PYD domains-containing protein 1a, C-terminus), which polymerizes and forms the Nlrp1a inflammasome.

Its subcellular location is the cytoplasm. It localises to the cytosol. The protein resides in the nucleus. The protein localises to the inflammasome. Activated by pathogens and other damage-associated signals: activation promotes ubiquitination and degradation of the N-terminal part, releasing the cleaved C-terminal part of the protein (NACHT, LRR and PYD domains-containing protein 1a, C-terminus), which polymerizes and forms the Nlrp1a inflammasome. Nlrp1a inflammasome is inhibited by DPP8 and DPP9, which sequester the C-terminal fragment of Nlrp1a (NACHT, LRR and PYD domains-containing protein 1a, C-terminus) in a ternary complex, thereby preventing Nlrp1a oligomerization and activation. Nlrp1a inflammasome is strongly activated by Val-boroPro (Talabostat, PT-100), an inhibitor of dipeptidyl peptidases DPP8 and DPP9. Val-boroPro relieves inhibition of DPP8 and/or DPP9 by promoting disruption of the ternary complex, releasing its C-terminal part from autoinhibition. Not activated by cleavage by B.anthracis lethal toxin (LT) endopeptidase. Its function is as follows. Acts as the sensor component of the Nlrp1a inflammasome, which mediates inflammasome activation in response to various pathogen-associated signals, leading to subsequent pyroptosis. Inflammasomes are supramolecular complexes that assemble in the cytosol in response to pathogens and other damage-associated signals and play critical roles in innate immunity and inflammation. Acts as a recognition receptor (PRR): recognizes specific pathogens and other damage-associated signals, such as Val-boroPro inhibitor, and mediates the formation of the inflammasome polymeric complex. In response to pathogen-associated signals, the N-terminal part of Nlrp1a is degraded by the proteasome, releasing the cleaved C-terminal part of the protein (NACHT, LRR and PYD domains-containing protein 1a, C-terminus), which polymerizes to initiate the formation of the inflammasome complex: the inflammasome directly recruits pro-caspase-1 (proCASP1) independently of PYCARD/ASC and promotes caspase-1 (CASP1) activation, which subsequently cleaves and activates inflammatory cytokines IL1B and IL18 and gasdermin-D (GSDMD), leading to pyroptosis. In the absence of GSDMD expression, the Nlrp1a inflammasome is able to recruit and activate CASP8, leading to activation of gasdermin-E (GSDME). Constitutes the precursor of the Nlrp1a inflammasome, which mediates autoproteolytic processing within the FIIND domain to generate the N-terminal and C-terminal parts, which are associated non-covalently in absence of pathogens and other damage-associated signals. Functionally, regulatory part that prevents formation of the Nlrp1a inflammasome: in absence of pathogens and other damage-associated signals, interacts with the C-terminal part of Nlrp1a (NACHT, LRR and PYD domains-containing protein 1a, C-terminus), preventing activation of the Nlrp1a inflammasome. In response to pathogen-associated signals, this part is ubiquitinated by the N-end rule pathway and degraded by the proteasome, releasing the cleaved C-terminal part of the protein, which polymerizes and forms the Nlrp1a inflammasome. In terms of biological role, constitutes the active part of the Nlrp1a inflammasome. In absence of pathogens and other damage-associated signals, interacts with the N-terminal part of Nlrp1a (NACHT, LRR and PYD domains-containing protein 1a, N-terminus), preventing activation of the Nlrp1a inflammasome. In response to pathogen-associated signals, the N-terminal part of Nlrp1a is degraded by the proteasome, releasing this form, which polymerizes to form the Nlrp1a inflammasome complex: the Nlrp1a inflammasome complex then directly recruits pro-caspase-1 (proCASP1) and promotes caspase-1 (CASP1) activation, leading to gasdermin-D (GSDMD) cleavage and subsequent pyroptosis. The sequence is that of NACHT, LRR and PYD domains-containing protein 1a allele 3 from Rattus norvegicus (Rat).